The following is a 244-amino-acid chain: Carbonic anhydrase (244 aa).

Positions 1–19 (MKGKFSIALMLSACFSASA) are cleaved as a signal peptide. Positions 23 to 244 (VHWGYEGSGD…QPLNGRIIIH (222 aa)) constitute an Alpha-carbonic anhydrase domain. A disulfide bridge connects residues C46 and C199. H84 serves as the catalytic Proton acceptor. Zn(2+) is bound by residues H109, H111, and H128. Position 195 to 196 (195 to 196 (TT)) interacts with substrate.

The protein belongs to the alpha-carbonic anhydrase family. It depends on Zn(2+) as a cofactor.

It localises to the periplasm. It carries out the reaction hydrogencarbonate + H(+) = CO2 + H2O. Functionally, reversible hydration of carbon dioxide. In Pectobacterium atrosepticum (strain SCRI 1043 / ATCC BAA-672) (Erwinia carotovora subsp. atroseptica), this protein is Carbonic anhydrase (cah).